We begin with the raw amino-acid sequence, 61 residues long: Large ribosomal subunit protein uL30 (61 aa).

This sequence belongs to the universal ribosomal protein uL30 family. In terms of assembly, part of the 50S ribosomal subunit.

The sequence is that of Large ribosomal subunit protein uL30 from Rhizorhabdus wittichii (strain DSM 6014 / CCUG 31198 / JCM 15750 / NBRC 105917 / EY 4224 / RW1) (Sphingomonas wittichii).